The following is a 719-amino-acid chain: Protein psiJ (719 aa).

The signal sequence occupies residues 1 to 21; it reads MVSNLLKGLILFSLFISFLNG. At 22 to 653 the chain is on the extracellular side; the sequence is DDKIFPVTIR…RCQSVAVKAG (632 aa). 10 N-linked (GlcNAc...) asparagine glycosylation sites follow: Asn-46, Asn-59, Asn-86, Asn-113, Asn-301, Asn-372, Asn-435, Asn-457, Asn-562, and Asn-628. The 149-residue stretch at 112–260 folds into the PA14 domain; the sequence is QNQTDPRVFY…KDYCGVCEGT (149 aa). The chain crosses the membrane as a helical span at residues 654-674; it reads VIGGAAIAGVVVGGAVALGLA. The Cytoplasmic segment spans residues 675–719; sequence LFGAKAGYNHWMSLKNNQMATSSVNPLYEPSPHQGTNPLWEAPPT.

Belongs to the prespore-cell-inducing factor family.

Its subcellular location is the membrane. The sequence is that of Protein psiJ (psiJ) from Dictyostelium discoideum (Social amoeba).